The sequence spans 151 residues: 3-hydroxyacyl-[acyl-carrier-protein] dehydratase FabZ (151 aa).

Residue His-57 is part of the active site.

This sequence belongs to the thioester dehydratase family. FabZ subfamily.

The protein localises to the cytoplasm. It catalyses the reaction a (3R)-hydroxyacyl-[ACP] = a (2E)-enoyl-[ACP] + H2O. Involved in unsaturated fatty acids biosynthesis. Catalyzes the dehydration of short chain beta-hydroxyacyl-ACPs and long chain saturated and unsaturated beta-hydroxyacyl-ACPs. In Prochlorococcus marinus (strain SARG / CCMP1375 / SS120), this protein is 3-hydroxyacyl-[acyl-carrier-protein] dehydratase FabZ.